The chain runs to 652 residues: DNA ligase (652 aa).

NAD(+) is bound by residues 29-33, 78-79, and glutamate 107; these read DSEYD and SL. Lysine 109 functions as the N6-AMP-lysine intermediate in the catalytic mechanism. 4 residues coordinate NAD(+): arginine 130, glutamate 164, lysine 278, and lysine 302. Positions 395, 398, 413, and 418 each coordinate Zn(2+). A BRCT domain is found at 577 to 652; that stretch reads VADAALSGLT…VRDEAWLESL (76 aa).

Belongs to the NAD-dependent DNA ligase family. LigA subfamily. Mg(2+) is required as a cofactor. Requires Mn(2+) as cofactor.

It carries out the reaction NAD(+) + (deoxyribonucleotide)n-3'-hydroxyl + 5'-phospho-(deoxyribonucleotide)m = (deoxyribonucleotide)n+m + AMP + beta-nicotinamide D-nucleotide.. In terms of biological role, DNA ligase that catalyzes the formation of phosphodiester linkages between 5'-phosphoryl and 3'-hydroxyl groups in double-stranded DNA using NAD as a coenzyme and as the energy source for the reaction. It is essential for DNA replication and repair of damaged DNA. In Streptococcus pneumoniae (strain Taiwan19F-14), this protein is DNA ligase.